A 378-amino-acid chain; its full sequence is Protein SLG1 (378 aa).

The signal sequence occupies residues 1–21 (MRPNKTSLLLALLSILSQANA). The region spanning 22–110 (YEYVNCFSSL…EDAYSVYQLD (89 aa)) is the WSC domain. At 22–264 (YEYVNCFSSL…THKKKANVGA (243 aa)) the chain is on the extracellular side. N-linked (GlcNAc...) asparagine glycosylation is present at asparagine 65. 2 disordered regions span residues 115 to 201 (SNSI…TSST) and 236 to 256 (QNSGSATGTAGSDSTSGSKTH). Low complexity predominate over residues 236–253 (QNSGSATGTAGSDSTSGS). The chain crosses the membrane as a helical span at residues 265–285 (IVGGVVGGVVGAVAIALCILL). The Cytoplasmic portion of the chain corresponds to 286–378 (IVRHINMKRE…LTVVNPDEAD (93 aa)). The interval 318–378 (ASSFSSNHGP…LTVVNPDEAD (61 aa)) is disordered. A compositionally biased stretch (low complexity) spans 319–331 (SSFSSNHGPSSGS). 2 positions are modified to phosphoserine: serine 331 and serine 353.

Glycosylated. Phosphorylated. Phosphorylation serves a negative regulatory role.

Its subcellular location is the cell membrane. In terms of biological role, plays a role during G1 to regulate entering or exiting the cell cycle. Involved in stress responses. Has a role in cell wall integrity signaling. Activates ROM1 or ROM2 catalyzed guanine nucleotide exchange toward RHO1. Important regulator of the actin cytoskeleton rearrangements in conditions of cell wall expansion and membrane stretching. Specifically required for the actin reorganization induced by hypo-osmotic shock. Multicopy suppressor of 1,3-beta-glucan synthase (GS). Activates GS upstream of RHO1. Acts positively on the PKC1-MAPK pathway. Activates transiently SLT2 during alkaline stress, which leads to an increase in the expression of several specific genes. This chain is Protein SLG1 (SLG1), found in Saccharomyces cerevisiae (strain ATCC 204508 / S288c) (Baker's yeast).